The sequence spans 214 residues: MKIILLGAPGAGKGTQAQFIMNKFGIPQISTGDMFRAAIKAGTELGKQAKALMDEGKLVPDELTVALVKDRIAQADCANGFLLDGFPRTIPQADALKDSGVKIDFVLEFDVPDEVIVERMSGRRVHQTSGRSYHIVYNPPKVEGKDDVTGEDLIIRADDKPETVLDRLAVYHKQTSPLIDYYQAEAKAGNTQYFRLDGTQKVEEVSQELDKILG.

Residue 10–15 (GAGKGT) coordinates ATP. An NMP region spans residues 30–59 (STGDMFRAAIKAGTELGKQAKALMDEGKLV). Residues T31, R36, 57-59 (KLV), 85-88 (GFPR), and Q92 each bind AMP. The interval 122–159 (GRRVHQTSGRSYHIVYNPPKVEGKDDVTGEDLIIRADD) is LID. ATP contacts are provided by residues R123 and 132 to 133 (SY). 2 residues coordinate AMP: R156 and R167. Q200 is a binding site for ATP.

It belongs to the adenylate kinase family. As to quaternary structure, monomer.

It localises to the cytoplasm. The catalysed reaction is AMP + ATP = 2 ADP. It functions in the pathway purine metabolism; AMP biosynthesis via salvage pathway; AMP from ADP: step 1/1. Its function is as follows. Catalyzes the reversible transfer of the terminal phosphate group between ATP and AMP. Plays an important role in cellular energy homeostasis and in adenine nucleotide metabolism. In Haemophilus influenzae (strain PittEE), this protein is Adenylate kinase.